Reading from the N-terminus, the 262-residue chain is Phosphatidylserine decarboxylase proenzyme (262 aa).

Residues Asp86, His142, and Ser226 each act as charge relay system; for autoendoproteolytic cleavage activity in the active site. The active-site Schiff-base intermediate with substrate; via pyruvic acid; for decarboxylase activity is Ser226. A Pyruvic acid (Ser); by autocatalysis modification is found at Ser226.

Belongs to the phosphatidylserine decarboxylase family. PSD-B subfamily. Prokaryotic type I sub-subfamily. As to quaternary structure, heterodimer of a large membrane-associated beta subunit and a small pyruvoyl-containing alpha subunit. The cofactor is pyruvate. Is synthesized initially as an inactive proenzyme. Formation of the active enzyme involves a self-maturation process in which the active site pyruvoyl group is generated from an internal serine residue via an autocatalytic post-translational modification. Two non-identical subunits are generated from the proenzyme in this reaction, and the pyruvate is formed at the N-terminus of the alpha chain, which is derived from the carboxyl end of the proenzyme. The autoendoproteolytic cleavage occurs by a canonical serine protease mechanism, in which the side chain hydroxyl group of the serine supplies its oxygen atom to form the C-terminus of the beta chain, while the remainder of the serine residue undergoes an oxidative deamination to produce ammonia and the pyruvoyl prosthetic group on the alpha chain. During this reaction, the Ser that is part of the protease active site of the proenzyme becomes the pyruvoyl prosthetic group, which constitutes an essential element of the active site of the mature decarboxylase.

The protein localises to the cell membrane. It catalyses the reaction a 1,2-diacyl-sn-glycero-3-phospho-L-serine + H(+) = a 1,2-diacyl-sn-glycero-3-phosphoethanolamine + CO2. The protein operates within phospholipid metabolism; phosphatidylethanolamine biosynthesis; phosphatidylethanolamine from CDP-diacylglycerol: step 2/2. In terms of biological role, catalyzes the formation of phosphatidylethanolamine (PtdEtn) from phosphatidylserine (PtdSer). In Bacillus cereus (strain B4264), this protein is Phosphatidylserine decarboxylase proenzyme.